The primary structure comprises 374 residues: Anthranilate O-methyltransferase 2 (374 aa).

Tyr18 serves as a coordination point for S-adenosyl-L-homocysteine. Anthranilate is bound at residue Gln25. Residues Cys59, Asn64, Asp98, Leu99, Ser142, and Tyr143 each contribute to the S-adenosyl-L-homocysteine site. Residue Trp164 coordinates anthranilate. Residues Glu261 and Phe263 each coordinate Mg(2+).

Belongs to the methyltransferase superfamily. Type-7 methyltransferase family. SABATH subfamily.

It carries out the reaction anthranilate + S-adenosyl-L-methionine = O-methyl anthranilate + S-adenosyl-L-homocysteine. Functionally, methyltransferase involved in the biosynthesis of methyl anthranilate in response to stresses. Utilizes anthranilic acid as substrate. Produces exclusively the O-methyl ester. The protein is Anthranilate O-methyltransferase 2 (AAMT2) of Zea mays (Maize).